We begin with the raw amino-acid sequence, 277 residues long: DNA-binding transcriptional activator MhpR (277 aa).

An HTH iclR-type domain is found at 12–74; sequence VRGLTRGLML…PSDDSFRLTI (63 aa). Positions 34-53 form a DNA-binding region, H-T-H motif; it reads VGLLAELSGLHRTTVRRLLE. An IclR-ED domain is found at 89–262; the sequence is ISALAAPLLG…AKQIEEGVES (174 aa).

Functionally, activator of the mhpABCDFE operon coding for components of the 3-hydroxyphenylpropionate degradation pathway. The sequence is that of DNA-binding transcriptional activator MhpR (mhpR) from Escherichia coli (strain K12).